Consider the following 339-residue polypeptide: Adenosine deaminase (339 aa).

Residues His15 and His17 each coordinate Zn(2+). Residues His17, Asp19, and Gly172 each contribute to the substrate site. Residue His199 coordinates Zn(2+). The Proton donor role is filled by Glu202. A Zn(2+)-binding site is contributed by Asp279.

Belongs to the metallo-dependent hydrolases superfamily. Adenosine and AMP deaminases family. Adenosine deaminase subfamily. Zn(2+) serves as cofactor.

It catalyses the reaction adenosine + H2O + H(+) = inosine + NH4(+). It carries out the reaction 2'-deoxyadenosine + H2O + H(+) = 2'-deoxyinosine + NH4(+). Catalyzes the hydrolytic deamination of adenosine and 2-deoxyadenosine. In Lacticaseibacillus paracasei (strain ATCC 334 / BCRC 17002 / CCUG 31169 / CIP 107868 / KCTC 3260 / NRRL B-441) (Lactobacillus paracasei), this protein is Adenosine deaminase.